Consider the following 408-residue polypeptide: Lysosome-associated membrane glycoprotein 3 (408 aa).

The signal sequence occupies residues 1–20 (MPGQTSAVAVLLCLAVILHG). Residues 21 to 373 (YQIREKEFPE…IVDECLSDYT (353 aa)) are Lumenal-facing. Residues Asn-55 and Asn-225 are each glycosylated (N-linked (GlcNAc...) asparagine). Cys-230 and Cys-267 form a disulfide bridge. N-linked (GlcNAc...) asparagine glycosylation is present at Asn-284. A disulfide bridge connects residues Cys-331 and Cys-368. A helical transmembrane segment spans residues 374–394 (VVLPVVGIIVVVLCVVGLGIY). The Cytoplasmic segment spans residues 395–408 (KIRQRRQSSAYQRI).

The protein belongs to the LAMP family. Monomer. Interacts with FURIN.

It is found in the cell surface. The protein resides in the lysosome membrane. The protein localises to the cytoplasmic vesicle membrane. It localises to the early endosome membrane. Its function is as follows. Lysosomal membrane glycoprotein which plays a role in the unfolded protein response (UPR) that contributes to protein degradation and cell survival during proteasomal dysfunction. Plays a role in the process of fusion of the lysosome with the autophagosome, thereby modulating the autophagic process. Promotes hepatocellular lipogenesis through activation of the PI3K/Akt pathway. May also play a role in dendritic cell function and in adaptive immunity. In Rattus norvegicus (Rat), this protein is Lysosome-associated membrane glycoprotein 3 (Lamp3).